The following is a 787-amino-acid chain: Replication origin-binding protein (787 aa).

The region spanning 39-195 (HFKTFSEQIK…SLCMPHFKSA (157 aa)) is the Helicase ATP-binding domain. An ATP-binding site is contributed by 52-59 (APMGSGKT).

It belongs to the herpesviridae OriBP family.

Its function is as follows. Probably involved in DNA replication. Binds the origin of replication (ori). The chain is Replication origin-binding protein (U73) from Human herpesvirus 7 (strain JI) (HHV-7).